A 221-amino-acid chain; its full sequence is Protein-L-isoaspartate O-methyltransferase (221 aa).

Ser-70 is an active-site residue.

Belongs to the methyltransferase superfamily. L-isoaspartyl/D-aspartyl protein methyltransferase family.

The protein resides in the cytoplasm. It carries out the reaction [protein]-L-isoaspartate + S-adenosyl-L-methionine = [protein]-L-isoaspartate alpha-methyl ester + S-adenosyl-L-homocysteine. Functionally, catalyzes the methyl esterification of L-isoaspartyl residues in peptides and proteins that result from spontaneous decomposition of normal L-aspartyl and L-asparaginyl residues. It plays a role in the repair and/or degradation of damaged proteins. The polypeptide is Protein-L-isoaspartate O-methyltransferase (Alkalilimnicola ehrlichii (strain ATCC BAA-1101 / DSM 17681 / MLHE-1)).